The following is a 595-amino-acid chain: MAFWLSLIFFCFCTFASSTPPDDPVKCESGNNMCTVTNSYGAFPDRSICEAAKVEYPKTEAELVSIVAAATRAGQKVRVVTRYVHSIPKLVCTDGKDGVLISTKFLNNVVGTNPEAKTLTVESGVTLRQLIGEAAELELALPHAPYWWGLTVGGLMGTGAHGSSLWGKGSAVHDYVSEIRMVSPGLASDGYVKVRVLSETIDPDEFRAAKVSLGVLGVISQVTFQLQPMFKRSLTFVMQNDSDFGDQAVTFGEKHEFADFLWLPSQGKVVYRMDDRVPVNTSGNGLFDFFPFRPQLSVALAIIRSLEESEESSGDANDKCARAEQITSFLFSISYGVTNNGMEFTGYPVIGKQNHMMSSGTCLDSHQDGLITSCPWDPRIKGQFFHQTAFSIPLTRVKGFINDIKALVKIEPKSLCALERSNGILIRYVTSSPAFLGKEEKALDFDLTYYRSKDDPLAPRLYEDFIEEIEQMAIFKYNALPHWGKNRNLAFDGVIRKYKNANTFLKVKERFDPLGLFSTEWTNQILGLKGNVTIVKEGCALEGLCVCSDDAHCAPKKGYLCRPGKVYTKARVCTHVKSVNGYDDHTKFNLMFNRI.

The N-terminal stretch at 1–18 is a signal peptide; sequence MAFWLSLIFFCFCTFASS. The FAD-binding PCMH-type domain occupies 47-229; it reads SICEAAKVEY…SQVTFQLQPM (183 aa).

Belongs to the oxygen-dependent FAD-linked oxidoreductase family. The cofactor is FAD.

The catalysed reaction is L-gulono-1,4-lactone + O2 = L-ascorbate + H2O2 + H(+). Its pathway is cofactor biosynthesis; L-ascorbate biosynthesis. May be involved in the biosynthesis of ascorbic acid. This is Probable L-gulonolactone oxidase 1 from Arabidopsis thaliana (Mouse-ear cress).